A 418-amino-acid polypeptide reads, in one-letter code: ATP-dependent RNA helicase RhlB (418 aa).

The Q motif motif lies at 9–37; that stretch reads TKFADLPLEKSLISGLTSQGYEYCTPIQA. The 180-residue stretch at 40-219 folds into the Helicase ATP-binding domain; it reads LPITLTGKDI…FEHMNDPESI (180 aa). An ATP-binding site is contributed by 53 to 60; it reads AQTGTGKT. Positions 165 to 168 match the DEAD box motif; it reads DEAD. Residues 243-390 enclose the Helicase C-terminal domain; the sequence is KILLLLSLIE…CSEYDKNAML (148 aa).

This sequence belongs to the DEAD box helicase family. RhlB subfamily. Component of the RNA degradosome, which is a multiprotein complex involved in RNA processing and mRNA degradation.

The protein localises to the cytoplasm. It carries out the reaction ATP + H2O = ADP + phosphate + H(+). Functionally, DEAD-box RNA helicase involved in RNA degradation. Has RNA-dependent ATPase activity and unwinds double-stranded RNA. The sequence is that of ATP-dependent RNA helicase RhlB from Psychromonas ingrahamii (strain DSM 17664 / CCUG 51855 / 37).